Consider the following 513-residue polypeptide: Activin receptor type-2A (513 aa).

Residues 1 to 19 (MGAAAKLAFAVFLISCSSG) form the signal peptide. Topologically, residues 20 to 135 (AILGRSETQE…TSNPVTPKPP (116 aa)) are extracellular. 5 disulfide bridges follow: Cys30–Cys60, Cys50–Cys78, Cys85–Cys104, Cys91–Cys103, and Cys105–Cys110. N-linked (GlcNAc...) asparagine glycans are attached at residues Asn43 and Asn66. The chain crosses the membrane as a helical span at residues 136–161 (YYNILLYSLVPLMLIAGIVICAFWVY). Residues 162-513 (RHHKMAYPPV…VDFPPKESSL (352 aa)) are Cytoplasmic-facing. The Protein kinase domain occupies 192–485 (LQLLEVKARG…GERITQMQRL (294 aa)). Residues 198-206 (KARGRFGCV) and Lys219 contribute to the ATP site. Catalysis depends on Asp322, which acts as the Proton acceptor.

This sequence belongs to the protein kinase superfamily. TKL Ser/Thr protein kinase family. TGFB receptor subfamily. In terms of assembly, part of a complex consisting of MAGI2/ARIP1, ACVR2A, ACVR1B and SMAD3. Interacts with MAGI2/ARIP1. Interacts with type I receptor ACVR1. Interacts with BMP7. Interacts with TSC22D1/TSC-22. Interacts with activin A/INHBA. Requires Mg(2+) as cofactor. The cofactor is Mn(2+).

The protein resides in the cell membrane. It carries out the reaction L-threonyl-[receptor-protein] + ATP = O-phospho-L-threonyl-[receptor-protein] + ADP + H(+). The catalysed reaction is L-seryl-[receptor-protein] + ATP = O-phospho-L-seryl-[receptor-protein] + ADP + H(+). Functionally, on ligand binding, forms a receptor complex consisting of two type II and two type I transmembrane serine/threonine kinases. Type II receptors phosphorylate and activate type I receptors which autophosphorylate, then bind and activate SMAD transcriptional regulators. Receptor for activin A, activin B and inhibin A. Mediates induction of adipogenesis by GDF6. This Homo sapiens (Human) protein is Activin receptor type-2A.